A 305-amino-acid chain; its full sequence is MAFLVERCGGEMVVSMERSHGRSTTTAAAVTAAPAPFLSKTYQLVDDPSTDDVVSWGEDEATFVVWRPPEFARDLLPNYFKHNNFSSFVRQLNTYGFRKIVADRWEFANEFFRKGAKHLLSEIHRRKSSSCSQPQPPPPFPMHQHYPLSLFSPPTTPRSPPVGAAAAAAYHFQEEYCSSPADYAGGGGDLLAALSEDNRQLRRRNSLLLSELAHMRKLYNDIIYFLQNHVEPVAPPPLAAATSCRLVELGPSTTERRRCAASPSGDNDDDAAVRLFGVRLDDDHGKKRRVQLVQEDEGDEQGSEG.

Positions 201 to 230 (LRRRNSLLLSELAHMRKLYNDIIYFLQNHV) are hydrophobic repeat HR-A/B. Positions 286-289 (KKRR) match the Nuclear localization signal motif. The tract at residues 286–305 (KKRRVQLVQEDEGDEQGSEG) is disordered. Positions 294–305 (QEDEGDEQGSEG) are enriched in acidic residues.

Belongs to the HSF family. Class B subfamily. In terms of assembly, homotrimer. Exhibits temperature-dependent phosphorylation.

The protein localises to the nucleus. Its function is as follows. Transcriptional regulator that specifically binds DNA of heat shock promoter elements (HSE). In Oryza sativa subsp. japonica (Rice), this protein is Heat stress transcription factor B-4d (HSFB4D).